The following is a 62-amino-acid chain: Large ribosomal subunit protein bL28 (62 aa).

The protein belongs to the bacterial ribosomal protein bL28 family.

The protein is Large ribosomal subunit protein bL28 of Bacillus velezensis (strain DSM 23117 / BGSC 10A6 / LMG 26770 / FZB42) (Bacillus amyloliquefaciens subsp. plantarum).